Consider the following 212-residue polypeptide: Thymidylate kinase (212 aa).

11–18 (GPEGAGKT) is an ATP binding site.

Belongs to the thymidylate kinase family.

The enzyme catalyses dTMP + ATP = dTDP + ADP. In terms of biological role, phosphorylation of dTMP to form dTDP in both de novo and salvage pathways of dTTP synthesis. The protein is Thymidylate kinase of Streptococcus pneumoniae serotype 2 (strain D39 / NCTC 7466).